Here is a 352-residue protein sequence, read N- to C-terminus: Biotin synthase (352 aa).

The Radical SAM core domain occupies 44–262 (NRVQVSTLLS…LAVARIMMPK (219 aa)). 3 residues coordinate [4Fe-4S] cluster: cysteine 59, cysteine 63, and cysteine 66. [2Fe-2S] cluster-binding residues include cysteine 103, cysteine 134, cysteine 194, and arginine 266.

It belongs to the radical SAM superfamily. Biotin synthase family. Homodimer. It depends on [4Fe-4S] cluster as a cofactor. [2Fe-2S] cluster is required as a cofactor.

The catalysed reaction is (4R,5S)-dethiobiotin + (sulfur carrier)-SH + 2 reduced [2Fe-2S]-[ferredoxin] + 2 S-adenosyl-L-methionine = (sulfur carrier)-H + biotin + 2 5'-deoxyadenosine + 2 L-methionine + 2 oxidized [2Fe-2S]-[ferredoxin]. It participates in cofactor biosynthesis; biotin biosynthesis; biotin from 7,8-diaminononanoate: step 2/2. In terms of biological role, catalyzes the conversion of dethiobiotin (DTB) to biotin by the insertion of a sulfur atom into dethiobiotin via a radical-based mechanism. This Pseudomonas paraeruginosa (strain DSM 24068 / PA7) (Pseudomonas aeruginosa (strain PA7)) protein is Biotin synthase.